A 74-amino-acid polypeptide reads, in one-letter code: Conotoxin AbVIH (74 aa).

Positions 1–17 (VLIIAVLFLTACQLTTA) are cleaved as a signal peptide. Residues 18–40 (ETSSRGKQKHRALRSTDKDSRMT) constitute a propeptide that is removed on maturation. Positions 19 to 40 (TSSRGKQKHRALRSTDKDSRMT) are disordered. Cystine bridges form between cysteine 43/cysteine 57, cysteine 50/cysteine 61, and cysteine 56/cysteine 68.

It belongs to the conotoxin O1 superfamily. In terms of tissue distribution, expressed by the venom duct.

Its subcellular location is the secreted. The chain is Conotoxin AbVIH from Conus abbreviatus (Abbreviated cone).